We begin with the raw amino-acid sequence, 226 residues long: Amelogenin (226 aa).

An N-terminal signal peptide occupies residues 1-16; the sequence is MGTWILFACLLGTAFA. Ser-32 is subject to Phosphoserine. Positions 86 to 196 are disordered; sequence QQHPPSHTTL…LPPQQALPPM (111 aa). Low complexity-rich tracts occupy residues 88–120 and 137–182; these read HPPSHTTLPPHHHIPVGPAQQPVVPQQPLMPVP and PTSQ…SPLH. Positions 183–192 are enriched in pro residues; the sequence is PIQPLPPQQA.

Belongs to the amelogenin family.

It is found in the secreted. Its subcellular location is the extracellular space. The protein localises to the extracellular matrix. In terms of biological role, plays a role in the biomineralization of teeth. Seems to regulate the formation of crystallites during the secretory stage of tooth enamel development. Thought to play a major role in the structural organization and mineralization of developing enamel. This is Amelogenin (AMEL) from Cavia porcellus (Guinea pig).